A 449-amino-acid chain; its full sequence is Tubulin alpha-8 chain (449 aa).

Positions 1 to 4 (MREC) match the MREC motif motif. GTP-binding residues include Gln-11, Glu-71, Ser-140, Gly-144, Thr-145, Thr-179, Asn-206, and Asn-228. Glu-71 is a Mg(2+) binding site. The active site involves Glu-254.

Belongs to the tubulin family. Dimer of alpha and beta chains. A typical microtubule is a hollow water-filled tube with an outer diameter of 25 nm and an inner diameter of 15 nM. Alpha-beta heterodimers associate head-to-tail to form protofilaments running lengthwise along the microtubule wall with the beta-tubulin subunit facing the microtubule plus end conferring a structural polarity. Microtubules usually have 13 protofilaments but different protofilament numbers can be found in some organisms and specialized cells. It depends on Mg(2+) as a cofactor. In terms of processing, some glutamate residues at the C-terminus are polyglycylated, resulting in polyglycine chains on the gamma-carboxyl group. Glycylation is mainly limited to tubulin incorporated into axonemes (cilia and flagella) whereas glutamylation is prevalent in neuronal cells, centrioles, axonemes, and the mitotic spindle. Both modifications can coexist on the same protein on adjacent residues, and lowering polyglycylation levels increases polyglutamylation, and reciprocally. Cilia and flagella glycylation is required for their stability and maintenance. Flagella glycylation controls sperm motility. Some glutamate residues at the C-terminus are polyglutamylated, resulting in polyglutamate chains on the gamma-carboxyl group. Polyglutamylation plays a key role in microtubule severing by spastin (SPAST). SPAST preferentially recognizes and acts on microtubules decorated with short polyglutamate tails: severing activity by SPAST increases as the number of glutamates per tubulin rises from one to eight, but decreases beyond this glutamylation threshold. Glutamylation is also involved in cilia motility. Post-translationally, the C-terminal phenylalanine residue is cleaved by MATCAP1/KIAA0895L. Expressed at highest levels in the testis, followed by skeletal and heart muscle. Expressed at low levels in the developing brain.

It localises to the cytoplasm. The protein localises to the cytoskeleton. It catalyses the reaction GTP + H2O = GDP + phosphate + H(+). Tubulin is the major constituent of microtubules, a cylinder consisting of laterally associated linear protofilaments composed of alpha- and beta-tubulin heterodimers. Microtubules grow by the addition of GTP-tubulin dimers to the microtubule end, where a stabilizing cap forms. Below the cap, tubulin dimers are in GDP-bound state, owing to GTPase activity of alpha-tubulin. The polypeptide is Tubulin alpha-8 chain (Tuba8) (Mus musculus (Mouse)).